Reading from the N-terminus, the 2779-residue chain is Protein lava lamp (2779 aa).

Disordered stretches follow at residues 31–62 (LAGSSNDLSSLQNVSASTTRGTKGKGRLDSLK), 79–98 (ALRKSQDERHKSSMSDSMES), and 110–135 (KTRSGDSSTPLVSPTKDSDPGDVSLL). Polar residues predominate over residues 33–51 (GSSNDLSSLQNVSASTTRG). 2 positions are modified to phosphoserine: Ser-34 and Ser-35. Residues 52 to 85 (TKGKGRLDSLKENLYKQQERLTALKERALRKSQD) are a coiled coil. Over residues 79 to 91 (ALRKSQDERHKSS) the composition is skewed to basic and acidic residues. A phosphoserine mark is found at Ser-95, Ser-98, Ser-122, and Ser-133. A coiled-coil region spans residues 141-175 (EKLLMLTQRTEQNRALLEQRKRDLAKSLLSVKSNI). Ser-186, Ser-352, and Ser-354 each carry phosphoserine. Coiled coils occupy residues 220-607 (ESRV…AESI) and 659-716 (GETL…KDLI). Residues 337–352 (ERQRNLELEQEQEKAS) show a composition bias toward basic and acidic residues. 4 disordered regions span residues 337-366 (ERQRNLELEQEQEKASRSPQSEAAHTDAQV), 622-662 (RPAS…GETL), 711-730 (REKDLISSTSTSSNLSQELS), and 1716-1753 (QAQLARQQHQQQQQQHHHPAVQSQQHPPPASLFFGGDA). Composition is skewed to low complexity over residues 717 to 730 (SSTSTSSNLSQELS) and 1716 to 1740 (QAQLARQQHQQQQQQHHHPAVQSQQ). 3 coiled-coil regions span residues 751–1733 (LFEK…QHHH), 1785–1863 (TIED…KLIQ), and 1941–2433 (NEAP…QSQN). 4 disordered regions span residues 2348–2367 (EDKEDQQVSAAPPKDDGETV), 2484–2507 (EEVTQQQQRELPQSQQSTQGEATS), 2552–2578 (NRGGASGGNPASTTVSAGGPPSLTANE), and 2633–2665 (TERSRVSDEPSATASSSAASSSSPSKISSAGSN). Residues 2488-2502 (QQQQRELPQSQQSTQ) are compositionally biased toward low complexity. Positions 2504 to 2544 (EATSDIMQKMQKALETQEMEIVTLKEQLAIRSAEYARLAAQ) form a coiled coil. The stretch at 2600–2641 (DMRVEEMIVELVQLLEERDHLQLKLSDTLRQLETERSRVSDE) forms a coiled coil. Low complexity predominate over residues 2643-2665 (SATASSSAASSSSPSKISSAGSN).

In terms of assembly, interacts with CLIP-190 and spectrin separately.

The protein resides in the golgi apparatus. It is found in the cytoplasmic vesicle. It localises to the autophagosome. In terms of biological role, lva and spectrin may form a Golgi-based scaffold that mediates interaction of Golgi bodies with microtubules and facilitates Golgi-derived membrane secretion required for the formation of furrows during cellularization. Under starvation conditions recruited by ema to developing autophagsosomes where it may function in autophagosome growth. This chain is Protein lava lamp (lva), found in Drosophila melanogaster (Fruit fly).